The following is a 180-amino-acid chain: NAD(P)H-quinone oxidoreductase subunit I, chloroplastic (180 aa).

2 4Fe-4S ferredoxin-type domains span residues 55–84 (GRIH…VDWR) and 95–124 (LNYS…MTEE). 8 residues coordinate [4Fe-4S] cluster: cysteine 64, cysteine 67, cysteine 70, cysteine 74, cysteine 104, cysteine 107, cysteine 110, and cysteine 114.

It belongs to the complex I 23 kDa subunit family. As to quaternary structure, NDH is composed of at least 16 different subunits, 5 of which are encoded in the nucleus. The cofactor is [4Fe-4S] cluster.

It is found in the plastid. The protein localises to the chloroplast thylakoid membrane. It catalyses the reaction a plastoquinone + NADH + (n+1) H(+)(in) = a plastoquinol + NAD(+) + n H(+)(out). The catalysed reaction is a plastoquinone + NADPH + (n+1) H(+)(in) = a plastoquinol + NADP(+) + n H(+)(out). Its function is as follows. NDH shuttles electrons from NAD(P)H:plastoquinone, via FMN and iron-sulfur (Fe-S) centers, to quinones in the photosynthetic chain and possibly in a chloroplast respiratory chain. The immediate electron acceptor for the enzyme in this species is believed to be plastoquinone. Couples the redox reaction to proton translocation, and thus conserves the redox energy in a proton gradient. The polypeptide is NAD(P)H-quinone oxidoreductase subunit I, chloroplastic (Agrostis stolonifera (Creeping bentgrass)).